Consider the following 460-residue polypeptide: Transcriptional regulatory protein UME1 (460 aa).

Positions 14 to 22 match the NEE-box motif; it reads NEEFKIWKK. 4 WD repeats span residues 233–271, 276–316, 339–379, and 411–451; these read PGIK…KPLW, SLDG…ALGD, FYSE…AIYN, and GENN…VLDG.

As to quaternary structure, component of the RPD3C(L) complex composed of at least ASH1, CTI6, DEP1, PHO23, RPD3, RXT2, RXT3, SAP30, SDS3, SIN3, UME1 and UME6. Component of the RPD3C(S) complex composed of at least EAF3, RCO1, RPD3, SIN3, and UME1. Interacts with RPD3.

Its subcellular location is the cytoplasm. It is found in the nucleus. Functionally, catalytic component of the RPD3 histone deacetylase complexes RPD3C(L) and RPD3C(S) responsible for the deacetylation of lysine residues on the N-terminal part of the core histones (H2A, H2B, H3 and H4). Histone deacetylation gives a tag for epigenetic repression and plays an important role in transcriptional regulation, cell cycle progression and developmental events. The polypeptide is Transcriptional regulatory protein UME1 (UME1) (Saccharomyces cerevisiae (strain ATCC 204508 / S288c) (Baker's yeast)).